Reading from the N-terminus, the 296-residue chain is Factor associated with metabolism and energy (296 aa).

Gly2 carries the N-myristoyl glycine lipid modification. Basic and acidic residues-rich tracts occupy residues 173-187 (SLHGEARINKQSPRD) and 267-281 (EQGKDEKKPRALVRT). Disordered stretches follow at residues 173–204 (SLHGEARINKQSPRDHKAKKTLQSTPRNDDHD) and 256–281 (LLWDSSSSDSDEQGKDEKKPRALVRT).

It localises to the cell membrane. The protein localises to the cytoplasmic vesicle. Its function is as follows. May be involved in tuning the metabolism, energy expenditure, and excretion processes. The chain is Factor associated with metabolism and energy from Homo sapiens (Human).